The chain runs to 272 residues: MRQIAIYGKGGIGKSTTTQNTVAALAEAGKKIMVVGCDPKADSTRLLLHGLNQKTVLDTLRDEGEDIDLEDVLKTGYGDTKCVESGGPEPGVGCAGRGIITSINLLESLGAYTNDLDYVFYDVLGDVVCGGFAMPIREGKAREIYIVASGEMMALYAANNISKGVQKFANTGGVRLGGIICNSRKVDNELELLTAFAKELGSQLIHFVPRDNMVQRAEINKKTVIDFDPAQPQADEYRTLAQNIDGNDMFVIPKPMTQDRLEELLMAHGILD.

8–15 (GKGGIGKS) contacts ATP. [4Fe-4S] cluster is bound at residue cysteine 94. Arginine 97 is modified (ADP-ribosylarginine; by dinitrogenase reductase ADP-ribosyltransferase). [4Fe-4S] cluster is bound at residue cysteine 129.

Belongs to the NifH/BchL/ChlL family. Homodimer. [4Fe-4S] cluster is required as a cofactor. The reversible ADP-ribosylation of Arg-97 inactivates the nitrogenase reductase and regulates nitrogenase activity.

The catalysed reaction is N2 + 8 reduced [2Fe-2S]-[ferredoxin] + 16 ATP + 16 H2O = H2 + 8 oxidized [2Fe-2S]-[ferredoxin] + 2 NH4(+) + 16 ADP + 16 phosphate + 6 H(+). Its function is as follows. The key enzymatic reactions in nitrogen fixation are catalyzed by the nitrogenase complex, which has 2 components: the iron protein and the molybdenum-iron protein. This Desulforamulus reducens (strain ATCC BAA-1160 / DSM 100696 / MI-1) (Desulfotomaculum reducens) protein is Nitrogenase iron protein.